Here is a 180-residue protein sequence, read N- to C-terminus: NADH-quinone oxidoreductase subunit B (180 aa).

4 residues coordinate [4Fe-4S] cluster: Cys59, Cys60, Cys124, and Cys154.

It belongs to the complex I 20 kDa subunit family. As to quaternary structure, NDH-1 is composed of 14 different subunits. Subunits NuoB, C, D, E, F, and G constitute the peripheral sector of the complex. It depends on [4Fe-4S] cluster as a cofactor.

The protein resides in the cell inner membrane. The enzyme catalyses a quinone + NADH + 5 H(+)(in) = a quinol + NAD(+) + 4 H(+)(out). Functionally, NDH-1 shuttles electrons from NADH, via FMN and iron-sulfur (Fe-S) centers, to quinones in the respiratory chain. The immediate electron acceptor for the enzyme in this species is believed to be ubiquinone. Couples the redox reaction to proton translocation (for every two electrons transferred, four hydrogen ions are translocated across the cytoplasmic membrane), and thus conserves the redox energy in a proton gradient. The chain is NADH-quinone oxidoreductase subunit B from Beijerinckia indica subsp. indica (strain ATCC 9039 / DSM 1715 / NCIMB 8712).